Reading from the N-terminus, the 250-residue chain is 5'-nucleotidase SurE (250 aa).

Positions 8, 9, 39, and 91 each coordinate a divalent metal cation.

The protein belongs to the SurE nucleotidase family. A divalent metal cation serves as cofactor.

It localises to the cytoplasm. It catalyses the reaction a ribonucleoside 5'-phosphate + H2O = a ribonucleoside + phosphate. Functionally, nucleotidase that shows phosphatase activity on nucleoside 5'-monophosphates. The chain is 5'-nucleotidase SurE from Shewanella halifaxensis (strain HAW-EB4).